The primary structure comprises 468 residues: MSKQQIGVVGMAVMGRNLALNIESRGYTVSVFNRSREKTEEVIAENPGKKLVPYYTVKEFVESLETPRRILLMVKAGAGTDAAIDSLKPYLEKGDIIIDGGNTFFQDTIRRNRELSAEGFNFIGTGVSGGEEGALKGPSIMPGGQKDAYELVAPILTKIAAVAEDGEPCVTYIGADGAGHYVKMVHNGIEYGDMQLIAEAYSLLKGGLNLSNEELANTFTEWNNGELSSYLIDITKDIFTKKDEDGNYLVDVILDEAANKGTGKWTSQSALDLGEPLSLITESVFARYISSLKAQRVAASKVLSGPKAQPAGDKAEFIEKVRRALYLGKIVSYAQGFSQLRAASDEYHWDLNYGEIAKIFRAGCIIRAQFLQKITDAYAENADIANLLLAPYFKKIADEYQQALRDVVAYAVQNGIPVPTFSAAVAYYDSYRAAVLPANLIQAQRDYFGAHTYKRTDKEGIFHTEWLE.

Residues 10-15 (GMAVMG), 33-35 (NRS), 74-76 (VKA), and Asn-102 contribute to the NADP(+) site. Residues Asn-102 and 128–130 (SGG) contribute to the substrate site. Residue Lys-183 is the Proton acceptor of the active site. 186–187 (HN) is a substrate binding site. Residue Glu-190 is the Proton donor of the active site. 5 residues coordinate substrate: Tyr-191, Lys-260, Arg-287, Arg-445, and His-451.

Belongs to the 6-phosphogluconate dehydrogenase family. In terms of assembly, homodimer.

The enzyme catalyses 6-phospho-D-gluconate + NADP(+) = D-ribulose 5-phosphate + CO2 + NADPH. It participates in carbohydrate degradation; pentose phosphate pathway; D-ribulose 5-phosphate from D-glucose 6-phosphate (oxidative stage): step 3/3. In terms of biological role, catalyzes the oxidative decarboxylation of 6-phosphogluconate to ribulose 5-phosphate and CO(2), with concomitant reduction of NADP to NADPH. This chain is 6-phosphogluconate dehydrogenase, decarboxylating (gnd), found in Salmonella typhimurium (strain LT2 / SGSC1412 / ATCC 700720).